Reading from the N-terminus, the 427-residue chain is Phosphatidylserine decarboxylase proenzyme 1, mitochondrial (427 aa).

The transit peptide at 1–77 (MRSYLRFSDR…RRFVYKLDQA (77 aa)) directs the protein to the mitochondrion. Residues 78–88 (VTAALGPNGRY) are Mitochondrial matrix-facing. A helical membrane pass occupies residues 89-107 (IAMVGMTASAVLLTFHYKF). Topologically, residues 108–427 (REVIAATDNV…TEDERLFAFY (320 aa)) are mitochondrial intermembrane. Catalysis depends on charge relay system; for autoendoproteolytic cleavage activity residues Asp-210, His-268, and Ser-379. Ser-379 (schiff-base intermediate with substrate; via pyruvic acid; for decarboxylase activity) is an active-site residue. Ser-379 carries the pyruvic acid (Ser); by autocatalysis modification.

This sequence belongs to the phosphatidylserine decarboxylase family. PSD-B subfamily. Eukaryotic type I sub-subfamily. As to quaternary structure, heterodimer of a large membrane-associated beta subunit and a small pyruvoyl-containing alpha subunit. Requires pyruvate as cofactor. In terms of processing, is synthesized initially as an inactive proenzyme. Formation of the active enzyme involves a self-maturation process in which the active site pyruvoyl group is generated from an internal serine residue via an autocatalytic post-translational modification. Two non-identical subunits are generated from the proenzyme in this reaction, and the pyruvate is formed at the N-terminus of the alpha chain, which is derived from the carboxyl end of the proenzyme. The autoendoproteolytic cleavage occurs by a canonical serine protease mechanism, in which the side chain hydroxyl group of the serine supplies its oxygen atom to form the C-terminus of the beta chain, while the remainder of the serine residue undergoes an oxidative deamination to produce ammonia and the pyruvoyl prosthetic group on the alpha chain. During this reaction, the Ser that is part of the protease active site of the proenzyme becomes the pyruvoyl prosthetic group, which constitutes an essential element of the active site of the mature decarboxylase.

It is found in the mitochondrion. The protein resides in the mitochondrion inner membrane. It carries out the reaction a 1,2-diacyl-sn-glycero-3-phospho-L-serine + H(+) = a 1,2-diacyl-sn-glycero-3-phosphoethanolamine + CO2. The protein operates within phospholipid metabolism; phosphatidylethanolamine biosynthesis; phosphatidylethanolamine from CDP-diacylglycerol: step 2/2. Its function is as follows. Catalyzes the formation of phosphatidylethanolamine (PtdEtn) from phosphatidylserine (PtdSer). Plays a central role in phospholipid metabolism and in the interorganelle trafficking of phosphatidylserine. This Toxoplasma gondii (strain ATCC 50853 / GT1) protein is Phosphatidylserine decarboxylase proenzyme 1, mitochondrial.